The primary structure comprises 288 residues: Homoserine kinase (288 aa).

Position 78-88 (P78–S88) interacts with ATP.

This sequence belongs to the GHMP kinase family. Homoserine kinase subfamily.

The protein localises to the cytoplasm. The catalysed reaction is L-homoserine + ATP = O-phospho-L-homoserine + ADP + H(+). It participates in amino-acid biosynthesis; L-threonine biosynthesis; L-threonine from L-aspartate: step 4/5. Catalyzes the ATP-dependent phosphorylation of L-homoserine to L-homoserine phosphate. This is Homoserine kinase from Streptococcus agalactiae serotype III (strain NEM316).